A 287-amino-acid chain; its full sequence is Small ribosomal subunit biogenesis GTPase RsgA (287 aa).

A CP-type G domain is found at Ser61–Leu218. GTP contacts are provided by residues Asn110 to Asp113 and Gly161 to Thr169. Zn(2+) contacts are provided by Cys242, Cys247, His249, and Cys255.

It belongs to the TRAFAC class YlqF/YawG GTPase family. RsgA subfamily. In terms of assembly, monomer. Associates with 30S ribosomal subunit, binds 16S rRNA. Zn(2+) serves as cofactor.

It is found in the cytoplasm. Functionally, one of several proteins that assist in the late maturation steps of the functional core of the 30S ribosomal subunit. Helps release RbfA from mature subunits. May play a role in the assembly of ribosomal proteins into the subunit. Circularly permuted GTPase that catalyzes slow GTP hydrolysis, GTPase activity is stimulated by the 30S ribosomal subunit. The protein is Small ribosomal subunit biogenesis GTPase RsgA of Clostridium perfringens (strain ATCC 13124 / DSM 756 / JCM 1290 / NCIMB 6125 / NCTC 8237 / Type A).